The primary structure comprises 315 residues: Adenine deaminase (315 aa).

Residues H14, H16, and H194 each coordinate Zn(2+). E197 acts as the Proton donor in catalysis. D275 contributes to the Zn(2+) binding site. Position 276 (D276) interacts with substrate.

It belongs to the metallo-dependent hydrolases superfamily. Adenosine and AMP deaminases family. Adenine deaminase type 2 subfamily. Requires Zn(2+) as cofactor.

The catalysed reaction is adenine + H2O + H(+) = hypoxanthine + NH4(+). Catalyzes the hydrolytic deamination of adenine to hypoxanthine. Plays an important role in the purine salvage pathway and in nitrogen catabolism. The polypeptide is Adenine deaminase (Pseudomonas putida (strain GB-1)).